Reading from the N-terminus, the 224-residue chain is Large ribosomal subunit protein uL3 (224 aa).

Position 159 is an N5-methylglutamine (Q159).

The protein belongs to the universal ribosomal protein uL3 family. Part of the 50S ribosomal subunit. Forms a cluster with proteins L14 and L19. Post-translationally, methylated by PrmB.

Its function is as follows. One of the primary rRNA binding proteins, it binds directly near the 3'-end of the 23S rRNA, where it nucleates assembly of the 50S subunit. The protein is Large ribosomal subunit protein uL3 of Janthinobacterium sp. (strain Marseille) (Minibacterium massiliensis).